The primary structure comprises 151 residues: uncharacterized protein (151 aa).

The segment at 1–77 (MSLLGGMWKS…LGSNPISSSR (77 aa)) is disordered. 2 stretches are compositionally biased toward low complexity: residues 19-54 (PKPS…RSSN) and 63-76 (SISG…ISSS).

This is an uncharacterized protein from Methanothermobacter marburgensis (strain ATCC BAA-927 / DSM 2133 / JCM 14651 / NBRC 100331 / OCM 82 / Marburg) (Methanobacterium thermoautotrophicum).